The sequence spans 71 residues: Conotoxin Vc6.12 (71 aa).

Residues 1-19 (MQKLIILLLVAAVLMSTQA) form the signal peptide. Positions 20–43 (LFQEKRPMKKINFLSKGKTDAEKQ) are excised as a propeptide. 3 disulfides stabilise this stretch: C48/C62, C55/C66, and C61/C70.

Belongs to the conotoxin O2 superfamily. In terms of tissue distribution, expressed by the venom duct.

It localises to the secreted. Inhibits voltage-gated ion channels. This is Conotoxin Vc6.12 from Conus victoriae (Queen Victoria cone).